A 911-amino-acid chain; its full sequence is Ribonuclease J (911 aa).

The transit peptide at 1–70 directs the protein to the chloroplast; the sequence is MMKPASLQGF…VTSAPASGTS (70 aa). Residues 58–90 are disordered; the sequence is SCSVTSAPASGTSSSSKTPRRRSGRLEGVGKSM. Low complexity predominate over residues 63 to 74; that stretch reads SAPASGTSSSSK. Positions 175, 177, 179, 180, 245, and 267 each coordinate Zn(2+). Substrate contacts are provided by residues 336–338 and 468–472; these read ASN and HTSGH. Histidine 494 contributes to the Zn(2+) binding site. 2 disordered regions span residues 695–723 and 735–824; these read VEGN…TLED and EETA…WKPE. 2 stretches are compositionally biased toward basic and acidic residues: residues 713-722 and 783-795; these read SPKEVDRTLE and ADTE…KENS. Positions 796–806 are enriched in acidic residues; the sequence is RDDDELADASD. One can recognise a Myb-like domain in the interval 813–877; the sequence is PKRVRKNKWK…QCKSLWASLI (65 aa).

Belongs to the metallo-beta-lactamase superfamily. RNA-metabolizing metallo-beta-lactamase-like family. Bacterial RNase J subfamily. As to quaternary structure, homodimer. May be a subunit of the RNA degradosome. The cofactor is Zn(2+). In terms of tissue distribution, moslty expressed in inflorescences, seedlings, leaves, flowers and flower buds, and, to a lower extent, in stems, siliques and roots.

Its subcellular location is the plastid. The protein resides in the chloroplast. Functionally, essential protein required during embryogenesis, especially in initiating and maintaining the organization of shoot apical meristems (SAMs), cotyledons, and hypocotyls. Involved in auxin-mediated pathways during embryogenesis. RNase that has both endonuclease and 5'-3' exonuclease activities. Involved in RNA surveillance to prevent overaccumulation of antisense RNA. Probably involved in maturation of rRNA and in some organisms also mRNA maturation and/or decay. The polypeptide is Ribonuclease J (Arabidopsis thaliana (Mouse-ear cress)).